The chain runs to 984 residues: Putative formate dehydrogenase SA2102 (984 aa).

The 2Fe-2S ferredoxin-type domain occupies 3-79 (EHLVVTLDGK…PMTVNTVNND (77 aa)). [2Fe-2S] cluster contacts are provided by Cys37, Cys48, Cys51, and Cys63. The 41-residue stretch at 79 to 119 (DVKDAQKEALDRILEKHMLYCTVCDYNNGDCEIHNTMDAWG) folds into the 4Fe-4S His(Cys)3-ligated-type domain. Positions 95, 99, 102, 109, 147, 150, 153, 157, 190, 193, 196, 200, 264, 267, 271, and 299 each coordinate [4Fe-4S] cluster. 4Fe-4S ferredoxin-type domains lie at 138–165 (PFYRYDPNQCILCGRCVEACQDIEVNET) and 181–211 (NDVPINESSCVSCGQCATVCPCNAMMEVNME). Residues 252–984 (MRKERIKKTK…YVFPGNQVDK (733 aa)) are formate dehydrogenase. Positions 257-313 (IKKTKTVCTYCGVGCSFEVWTKDREILKVQPSHDSPANKIATCVKGKFSWGHINSDQ) constitute a 4Fe-4S Mo/W bis-MGD-type domain.

In the C-terminal section; belongs to the prokaryotic molybdopterin-containing oxidoreductase family. Requires [2Fe-2S] cluster as cofactor. It depends on [4Fe-4S] cluster as a cofactor. Mo-bis(molybdopterin guanine dinucleotide) serves as cofactor.

The catalysed reaction is formate + NAD(+) = CO2 + NADH. This chain is Putative formate dehydrogenase SA2102, found in Staphylococcus aureus (strain N315).